The following is a 274-amino-acid chain: uncharacterized protein (274 aa).

The first 19 residues, 1–19 (MKRINKVLLSLLCLVIAYA), serve as a signal peptide directing secretion.

This is an uncharacterized protein from Rickettsia prowazekii (strain Madrid E).